Reading from the N-terminus, the 116-residue chain is Neuropeptide Y receptor type 1 (116 aa).

Residues 1-6 (LVLIAV) traverse the membrane as a helical segment. Over 7–24 (ERHQLIINPRGWRPSNRH) the chain is Cytoplasmic. Residues 25–45 (AYVGIAVIWVLAVASSLPFLI) traverse the membrane as a helical segment. At 46–81 (YQVLTDEPFQNVTLDAFKDKYVCFDKFPSDSHRLSY) the chain is on the extracellular side. N-linked (GlcNAc...) asparagine glycosylation is present at asparagine 56. A helical transmembrane segment spans residues 82–102 (TTLLLVLQYFGPLCFIFICYF). Residues 103–116 (KIYIRLKRRNNMMD) are Cytoplasmic-facing.

Belongs to the G-protein coupled receptor 1 family.

Its subcellular location is the cell membrane. In terms of biological role, receptor for neuropeptide Y and peptide YY. This Ovis aries (Sheep) protein is Neuropeptide Y receptor type 1 (NPY1R).